The following is a 283-amino-acid chain: 4-hydroxy-3-methylbut-2-enyl diphosphate reductase (283 aa).

Cysteine 12 is a binding site for [4Fe-4S] cluster. Residues histidine 40 and histidine 73 each contribute to the (2E)-4-hydroxy-3-methylbut-2-enyl diphosphate site. Histidine 40 and histidine 73 together coordinate dimethylallyl diphosphate. Residues histidine 40 and histidine 73 each coordinate isopentenyl diphosphate. Residue cysteine 95 coordinates [4Fe-4S] cluster. Position 123 (histidine 123) interacts with (2E)-4-hydroxy-3-methylbut-2-enyl diphosphate. Histidine 123 is a dimethylallyl diphosphate binding site. Histidine 123 contacts isopentenyl diphosphate. Glutamate 125 acts as the Proton donor in catalysis. Threonine 161 lines the (2E)-4-hydroxy-3-methylbut-2-enyl diphosphate pocket. Residue cysteine 189 participates in [4Fe-4S] cluster binding. Positions 217, 219, and 261 each coordinate (2E)-4-hydroxy-3-methylbut-2-enyl diphosphate. Positions 217, 219, and 261 each coordinate dimethylallyl diphosphate. Isopentenyl diphosphate contacts are provided by serine 217, asparagine 219, and serine 261.

It belongs to the IspH family. [4Fe-4S] cluster serves as cofactor.

It catalyses the reaction isopentenyl diphosphate + 2 oxidized [2Fe-2S]-[ferredoxin] + H2O = (2E)-4-hydroxy-3-methylbut-2-enyl diphosphate + 2 reduced [2Fe-2S]-[ferredoxin] + 2 H(+). It carries out the reaction dimethylallyl diphosphate + 2 oxidized [2Fe-2S]-[ferredoxin] + H2O = (2E)-4-hydroxy-3-methylbut-2-enyl diphosphate + 2 reduced [2Fe-2S]-[ferredoxin] + 2 H(+). It functions in the pathway isoprenoid biosynthesis; dimethylallyl diphosphate biosynthesis; dimethylallyl diphosphate from (2E)-4-hydroxy-3-methylbutenyl diphosphate: step 1/1. Its pathway is isoprenoid biosynthesis; isopentenyl diphosphate biosynthesis via DXP pathway; isopentenyl diphosphate from 1-deoxy-D-xylulose 5-phosphate: step 6/6. Catalyzes the conversion of 1-hydroxy-2-methyl-2-(E)-butenyl 4-diphosphate (HMBPP) into a mixture of isopentenyl diphosphate (IPP) and dimethylallyl diphosphate (DMAPP). Acts in the terminal step of the DOXP/MEP pathway for isoprenoid precursor biosynthesis. The sequence is that of 4-hydroxy-3-methylbut-2-enyl diphosphate reductase from Citrifermentans bemidjiense (strain ATCC BAA-1014 / DSM 16622 / JCM 12645 / Bem) (Geobacter bemidjiensis).